A 151-amino-acid chain; its full sequence is Putative transcriptional regulatory protein TK2151 (151 aa).

It belongs to the Tfx family.

Functionally, putative transcriptional regulator. The polypeptide is Putative transcriptional regulatory protein TK2151 (Thermococcus kodakarensis (strain ATCC BAA-918 / JCM 12380 / KOD1) (Pyrococcus kodakaraensis (strain KOD1))).